Consider the following 367-residue polypeptide: Alpha-2-HS-glycoprotein (367 aa).

The signal sequence occupies residues 1 to 18; it reads MKSLVLLLCLAQLWGCHS. A Cystatin fetuin-A-type 1 domain is found at 27 to 133; the sequence is YRQPNCDDPE…KFSVVYAKCD (107 aa). 6 disulfide bridges follow: Cys32-Cys358, Cys89-Cys100, Cys114-Cys132, Cys146-Cys149, Cys208-Cys219, and Cys230-Cys247. Ser134, Ser135, and Ser138 each carry phosphoserine. Positions 144–255 constitute a Cystatin fetuin-A-type 2 domain; the sequence is KVCQDCPLLA…TCTVFQTQPV (112 aa). Asn156 and Asn176 each carry an N-linked (GlcNAc...) asparagine glycan. Residues 254–301 form a disordered region; it reads PVTSQPQPEGANETVPTPVVDPDAPPSPPLGAPGLPPAGSPPDSHVLL. The N-linked (GlcNAc...) asparagine glycan is linked to Asn265. The segment covering 276–293 has biased composition (pro residues); sequence DAPPSPPLGAPGLPPAGS. Residues 301-340 constitute a propeptide, connecting peptide; that stretch reads LAAPPGHQLHWAHYDLRHTFMGVVSLGSPSGEASHPRKTR. Thr319 carries the post-translational modification Phosphothreonine. Ser325, Ser328, and Ser330 each carry phosphoserine. O-linked (GalNAc...) threonine glycosylation is present at Thr339.

This sequence belongs to the fetuin family. In terms of assembly, alpha-2-HS glycoprotein derives from this precursor, when the connecting peptide is cleaved off. The two chains A and B are held together by a single disulfide bond. Post-translationally, phosphorylated by FAM20C in the extracellular medium.

It is found in the secreted. In terms of biological role, promotes endocytosis, possesses opsonic properties and influences the mineral phase of bone. Shows affinity for calcium and barium ions. In Pan troglodytes (Chimpanzee), this protein is Alpha-2-HS-glycoprotein (AHSG).